The chain runs to 127 residues: Glycine cleavage system H protein (127 aa).

In terms of domain architecture, Lipoyl-binding spans 22 to 104 (NVRIGITDYA…YDKAWMIVVK (83 aa)). At Lys63 the chain carries N6-lipoyllysine.

The protein belongs to the GcvH family. In terms of assembly, the glycine cleavage system is composed of four proteins: P, T, L and H. Requires (R)-lipoate as cofactor.

Functionally, the glycine cleavage system catalyzes the degradation of glycine. The H protein shuttles the methylamine group of glycine from the P protein to the T protein. Its function is as follows. Is also involved in protein lipoylation via its role as an octanoyl/lipoyl carrier protein intermediate. This chain is Glycine cleavage system H protein, found in Geobacillus kaustophilus (strain HTA426).